Reading from the N-terminus, the 561-residue chain is Dihydroxy-acid dehydratase (561 aa).

Cysteine 51 is a [2Fe-2S] cluster binding site. Residue aspartate 83 participates in Mg(2+) binding. Residue cysteine 124 coordinates [2Fe-2S] cluster. Residues aspartate 125 and lysine 126 each contribute to the Mg(2+) site. At lysine 126 the chain carries N6-carboxylysine. Cysteine 196 contacts [2Fe-2S] cluster. Glutamate 448 is a binding site for Mg(2+). The active-site Proton acceptor is the serine 473.

It belongs to the IlvD/Edd family. In terms of assembly, homodimer. It depends on [2Fe-2S] cluster as a cofactor. Mg(2+) serves as cofactor.

It carries out the reaction (2R)-2,3-dihydroxy-3-methylbutanoate = 3-methyl-2-oxobutanoate + H2O. It catalyses the reaction (2R,3R)-2,3-dihydroxy-3-methylpentanoate = (S)-3-methyl-2-oxopentanoate + H2O. The protein operates within amino-acid biosynthesis; L-isoleucine biosynthesis; L-isoleucine from 2-oxobutanoate: step 3/4. It functions in the pathway amino-acid biosynthesis; L-valine biosynthesis; L-valine from pyruvate: step 3/4. Its function is as follows. Functions in the biosynthesis of branched-chain amino acids. Catalyzes the dehydration of (2R,3R)-2,3-dihydroxy-3-methylpentanoate (2,3-dihydroxy-3-methylvalerate) into 2-oxo-3-methylpentanoate (2-oxo-3-methylvalerate) and of (2R)-2,3-dihydroxy-3-methylbutanoate (2,3-dihydroxyisovalerate) into 2-oxo-3-methylbutanoate (2-oxoisovalerate), the penultimate precursor to L-isoleucine and L-valine, respectively. The chain is Dihydroxy-acid dehydratase from Sulfolobus acidocaldarius (strain ATCC 33909 / DSM 639 / JCM 8929 / NBRC 15157 / NCIMB 11770).